The primary structure comprises 211 residues: Large ribosomal subunit protein uL3 (211 aa).

Positions 122–147 are disordered; sequence AIKRHGQSRGPMAHGSRYHRRPGSMG.

The protein belongs to the universal ribosomal protein uL3 family. As to quaternary structure, part of the 50S ribosomal subunit. Forms a cluster with proteins L14 and L19.

In terms of biological role, one of the primary rRNA binding proteins, it binds directly near the 3'-end of the 23S rRNA, where it nucleates assembly of the 50S subunit. In Geobacillus sp. (strain WCH70), this protein is Large ribosomal subunit protein uL3.